The primary structure comprises 332 residues: Ephrin-B2a (332 aa).

A signal peptide spans 1-24; sequence MGDSLWRYYFGVLVIACKVNLSRA. N-linked (GlcNAc...) asparagine glycans are attached at residues Asn-20 and Asn-33. An Ephrin RBD domain is found at 25–161; the sequence is LILDSIYWNT…TKSMKIIMKV (137 aa). Topologically, residues 25 to 225 are extracellular; sequence LILDSIYWNT…VIGSEVALFA (201 aa). 2 disulfides stabilise this stretch: Cys-59-Cys-98 and Cys-86-Cys-150. Residue Asn-136 is glycosylated (N-linked (GlcNAc...) asparagine). Residues 162–212 form a disordered region; that stretch reads GQNPSDPISPKDYPTSYPPKHPDLGGKDSKSNEVLKPDASPHGEDKGDGNK. A compositionally biased stretch (basic and acidic residues) spans 181–210; sequence KHPDLGGKDSKSNEVLKPDASPHGEDKGDG. Residue Asn-211 is glycosylated (N-linked (GlcNAc...) asparagine). Residues 226 to 246 traverse the membrane as a helical segment; it reads CIASASVIVIIIIIMLVFLLL. Over 247–332 the chain is Cytoplasmic; that stretch reads KYRRRHRKHS…QSPANIYYKV (86 aa). A disordered region spans residues 255 to 285; it reads HSPQHATTLSLSTLATPKRGGSGGNNNGSEP. Low complexity predominate over residues 260–270; the sequence is ATTLSLSTLAT. Positions 330-332 match the PDZ-binding motif; it reads YKV.

It belongs to the ephrin family. Binds to the receptor tyrosine kinase ephb4. Post-translationally, inducible phosphorylation of tyrosine residues in the cytoplasmic domain.

It is found in the cell membrane. In terms of biological role, cell surface transmembrane ligand for Eph receptors, a family of receptor tyrosine kinases which are crucial for migration, repulsion and adhesion during neuronal, vascular and epithelial development. Binds promiscuously Eph receptors residing on adjacent cells, leading to contact-dependent bidirectional signaling into neighboring cells. The signaling pathway downstream of the receptor is referred to as forward signaling while the signaling pathway downstream of the ephrin ligand is referred to as reverse signaling. Together with ephb4 may play a central role in heart morphogenesis and angiogenesis through regulation of cell adhesion and cell migration. This is Ephrin-B2a (efnb2a) from Danio rerio (Zebrafish).